Here is a 177-residue protein sequence, read N- to C-terminus: ATP synthase subunit delta (177 aa).

The protein belongs to the ATPase delta chain family. In terms of assembly, F-type ATPases have 2 components, F(1) - the catalytic core - and F(0) - the membrane proton channel. F(1) has five subunits: alpha(3), beta(3), gamma(1), delta(1), epsilon(1). F(0) has three main subunits: a(1), b(2) and c(10-14). The alpha and beta chains form an alternating ring which encloses part of the gamma chain. F(1) is attached to F(0) by a central stalk formed by the gamma and epsilon chains, while a peripheral stalk is formed by the delta and b chains.

Its subcellular location is the cell inner membrane. Functionally, f(1)F(0) ATP synthase produces ATP from ADP in the presence of a proton or sodium gradient. F-type ATPases consist of two structural domains, F(1) containing the extramembraneous catalytic core and F(0) containing the membrane proton channel, linked together by a central stalk and a peripheral stalk. During catalysis, ATP synthesis in the catalytic domain of F(1) is coupled via a rotary mechanism of the central stalk subunits to proton translocation. Its function is as follows. This protein is part of the stalk that links CF(0) to CF(1). It either transmits conformational changes from CF(0) to CF(1) or is implicated in proton conduction. The sequence is that of ATP synthase subunit delta from Azobacteroides pseudotrichonymphae genomovar. CFP2.